The following is a 291-amino-acid chain: Glycine--tRNA ligase alpha subunit (291 aa).

This sequence belongs to the class-II aminoacyl-tRNA synthetase family. Tetramer of two alpha and two beta subunits.

The protein localises to the cytoplasm. It carries out the reaction tRNA(Gly) + glycine + ATP = glycyl-tRNA(Gly) + AMP + diphosphate. The chain is Glycine--tRNA ligase alpha subunit from Geobacter metallireducens (strain ATCC 53774 / DSM 7210 / GS-15).